The following is a 600-amino-acid chain: Kelch-like protein 24 (600 aa).

Residues 66-133 (TDVIICVEGK…VYTGKVKITT (68 aa)) form the BTB domain. Positions 168–270 (CLGIQRFADT…HPNYFVQTVE (103 aa)) constitute a BACK domain. Kelch repeat units follow at residues 314–363 (VIVV…ALRN), 365–407 (ILVS…VLLG), 408–454 (KVYV…SCIG), 456–502 (LFVI…SLNN), 504–544 (IYVA…VCNG), and 546–592 (IYIL…TIHR).

Forms homodimers. Interacts with GRIK2. Component of the BCR(KLHL24) E3 ubiquitin ligase complex, composed of CUL3, RBX1 and KLHL24. Interacts with CUL3. Interacts with KRT14. Post-translationally, autoubiquitinated. Autoubiquitination leads to proteasomal degradation and is necessary to control KLHL24 levels. In terms of tissue distribution, expressed in the brain.

The protein localises to the perikaryon. It localises to the cell projection. It is found in the axon. The protein resides in the cytoplasm. Its subcellular location is the cell junction. The protein localises to the desmosome. It localises to the adherens junction. Controls KRT14 levels during keratinocytes differentiation. As part of the BCR(KLHL24) E3 ubiquitin ligase complex, mediates ubiquitination of KRT14. Specifically reduces kainate receptor-mediated currents in hippocampal neurons, most probably by modulating channel properties. Has a crucial role in cardiac development and function. This chain is Kelch-like protein 24 (Klhl24), found in Mus musculus (Mouse).